Reading from the N-terminus, the 193-residue chain is Homeobox protein HD-12 (193 aa).

Positions 123 to 185 (SVIRRINFPK…NARRRILPFM (63 aa)) form a DNA-binding region, homeobox; TALE-type.

This sequence belongs to the TALE/KNOX homeobox family.

The protein localises to the nucleus. The sequence is that of Homeobox protein HD-12 (HD-12) from Encephalitozoon cuniculi (strain GB-M1) (Microsporidian parasite).